The following is a 420-amino-acid chain: Gamma-glutamyl phosphate reductase (420 aa).

This sequence belongs to the gamma-glutamyl phosphate reductase family.

The protein resides in the cytoplasm. The enzyme catalyses L-glutamate 5-semialdehyde + phosphate + NADP(+) = L-glutamyl 5-phosphate + NADPH + H(+). The protein operates within amino-acid biosynthesis; L-proline biosynthesis; L-glutamate 5-semialdehyde from L-glutamate: step 2/2. Its function is as follows. Catalyzes the NADPH-dependent reduction of L-glutamate 5-phosphate into L-glutamate 5-semialdehyde and phosphate. The product spontaneously undergoes cyclization to form 1-pyrroline-5-carboxylate. In Streptococcus pneumoniae (strain P1031), this protein is Gamma-glutamyl phosphate reductase.